The following is a 78-amino-acid chain: UPF0349 protein RBAM_029300 (78 aa).

It belongs to the UPF0349 family.

This Bacillus velezensis (strain DSM 23117 / BGSC 10A6 / LMG 26770 / FZB42) (Bacillus amyloliquefaciens subsp. plantarum) protein is UPF0349 protein RBAM_029300.